The primary structure comprises 3187 residues: Cilia- and flagella-associated protein 47 (3187 aa).

In terms of domain architecture, Calponin-homology (CH) spans 1746–1869; that stretch reads SDSERILLSW…LCVYMYERLP (124 aa). Residues 2024–2052 form a disordered region; the sequence is KLTESRQYPKHDDDMSSSGSDTDQGCSDS. The segment covering 2026–2037 has biased composition (basic and acidic residues); it reads TESRQYPKHDDD.

In terms of assembly, interacts with CFAP65. Highly expressed in spermatzoa (at protein level).

The protein localises to the cytoplasm. It localises to the cytoskeleton. It is found in the flagellum basal body. Its function is as follows. Plays a role in flagellar formation and sperm motility. The sequence is that of Cilia- and flagella-associated protein 47 from Homo sapiens (Human).